The sequence spans 427 residues: MIDYKKILGDYTPDYEESLRLKCIENGIIKKLNDIISSRNIDAEPVSVGSYSKGTNLKNSDLDIFIVFSKKYPKNEMESIGLSLGHYILENGVEKYAEHPYVSGYIENVKIDIVPAYKIEPGQRIVSTVDRTPLHTKYVIENTDENLRNDIRLLKIFMKANNVYGSEVSKAGFSGYLCEILVINFKSFDAVIKYFSKLKGRLIIPENSGKKFQEPVVIVDPVDPTRNAGAAVSLENLSRMKIASKLFLLNKNESFFYPREISPRYHKRGTCIYIITLKRPDIIDDIIYPQVFRFERQIFNIADRYGFMPVSSEINVDNNIEILIELQRDVLPDVSKHAGPPVDSDESINFINVWKDRALRGPYIERDRLYVDSETRIKSFYDALNLELKKMDIGKNLNKLKDGIKIIKYNNSDFNVVKKFFSKDIFH.

ATP-binding residues include S50 and K53. The CTP site is built by S50 and K53. Residues D61, D63, and D112 each coordinate Mg(2+). ATP-binding residues include H135, K155, and Y164. CTP is bound by residues H135, K155, and Y164.

It belongs to the tRNA nucleotidyltransferase/poly(A) polymerase family. Archaeal CCA-adding enzyme subfamily. As to quaternary structure, homodimer. Mg(2+) is required as a cofactor.

It carries out the reaction a tRNA precursor + 2 CTP + ATP = a tRNA with a 3' CCA end + 3 diphosphate. The enzyme catalyses a tRNA with a 3' CCA end + 2 CTP + ATP = a tRNA with a 3' CCACCA end + 3 diphosphate. Functionally, catalyzes the addition and repair of the essential 3'-terminal CCA sequence in tRNAs without using a nucleic acid template. Adds these three nucleotides in the order of C, C, and A to the tRNA nucleotide-73, using CTP and ATP as substrates and producing inorganic pyrophosphate. tRNA 3'-terminal CCA addition is required both for tRNA processing and repair. Also involved in tRNA surveillance by mediating tandem CCA addition to generate a CCACCA at the 3' terminus of unstable tRNAs. While stable tRNAs receive only 3'-terminal CCA, unstable tRNAs are marked with CCACCA and rapidly degraded. This Picrophilus torridus (strain ATCC 700027 / DSM 9790 / JCM 10055 / NBRC 100828 / KAW 2/3) protein is CCA-adding enzyme.